A 189-amino-acid chain; its full sequence is Potassium-transporting ATPase KdpC subunit (189 aa).

A helical transmembrane segment spans residues 5–25 (LLPALTMLLVFTVITGIVYPL).

The protein belongs to the KdpC family. As to quaternary structure, the system is composed of three essential subunits: KdpA, KdpB and KdpC.

The protein localises to the cell membrane. Its function is as follows. Part of the high-affinity ATP-driven potassium transport (or Kdp) system, which catalyzes the hydrolysis of ATP coupled with the electrogenic transport of potassium into the cytoplasm. This subunit acts as a catalytic chaperone that increases the ATP-binding affinity of the ATP-hydrolyzing subunit KdpB by the formation of a transient KdpB/KdpC/ATP ternary complex. This Mycobacterium bovis (strain ATCC BAA-935 / AF2122/97) protein is Potassium-transporting ATPase KdpC subunit.